The following is a 78-amino-acid chain: Pancreatic polypeptide prohormone (78 aa).

The first 19 residues, 1–19 (LLLSTCVALLLQPPLGALG), serve as a signal peptide directing secretion. Tyr55 bears the Tyrosine amide mark.

The protein belongs to the NPY family.

The protein localises to the secreted. Functionally, hormone secreted by pancreatic cells that acts as a regulator of pancreatic and gastrointestinal functions probably by signaling through the G protein-coupled receptor NPY4R2. In Ovis aries (Sheep), this protein is Pancreatic polypeptide prohormone (PPY).